The primary structure comprises 57 residues: Phylloseptin-Az4 (57 aa).

The signal sequence occupies residues Leu1–Cys13. Positions Glu14–Glu35 are excised as a propeptide. The disordered stretch occupies residues Glu16–Glu35. Positions Glu21–Lys32 are enriched in acidic residues. Residue Leu56 is modified to Leucine amide.

In terms of tissue distribution, expressed by the skin glands.

Its subcellular location is the secreted. Has antibacterial activity against the Gram-positive bacterium M.luteus ATCC 49732 (MIC=1.3 uM). Does not inhibit the growth of the fungus C.albicans. This Pithecopus azureus (Orange-legged monkey tree frog) protein is Phylloseptin-Az4 (psn12).